Here is a 271-residue protein sequence, read N- to C-terminus: Short-chain dehydrogenase PC-15 (271 aa).

Ile-8, Thr-34, Lys-40, Asp-56, Asn-84, Tyr-148, Lys-152, Val-181, and Thr-183 together coordinate NADP(+). Tyr-148 acts as the Proton acceptor in catalysis. Lys-152 (lowers pKa of active site Tyr) is an active-site residue.

It belongs to the short-chain dehydrogenases/reductases (SDR) family.

Its pathway is secondary metabolite biosynthesis. Short-chain dehydrogenase; part of the gene cluster that mediates the biosynthesis of the indole diterpenes penitrems. The geranylgeranyl diphosphate (GGPP) synthase penG catalyzes the first step in penitrem biosynthesis via conversion of farnesyl pyrophosphate and isopentyl pyrophosphate into geranylgeranyl pyrophosphate (GGPP). Condensation of indole-3-glycerol phosphate with GGPP by the prenyl transferase penC then forms 3-geranylgeranylindole (3-GGI). Epoxidation by the FAD-dependent monooxygenase penM leads to a epoxidized-GGI that is substrate of the terpene cyclase penB for cyclization to yield paspaline. Paspaline is subsequently converted to 13-desoxypaxilline by the cytochrome P450 monooxygenase penP, the latter being then converted to paxilline by the cytochrome P450 monooxygenase penQ. Paxilline is converted to beta-paxitriol via C-10 ketoreduction by the short-chain dehydrogenase PC-15 which can be monoprenylated at the C-20 by the indole diterpene prenyltransferase penD. A two-step elimination (acetylation and elimination) process performed by the O-acetyltransferase PC-16 and the P.simplicissimum ptmI-ortholog not yet identified in P.crustosum, leads to the production of the prenylated form of penijanthine. The FAD-linked oxidoreductase ptmO then converts the prenylated form of penijanthine into PC-M5 which is in turn transformed into PC-M4 by the aromatic dimethylallyltransferase PC-22. A series of oxidation steps involving 4 cytochrome P450 monooxygenases (PC-21, PC-05, PC-23, PC-20) and a FAD-dependent monooxygenase (PC-14) are required for the transformation of PC-M4 to penitrems A and E. Synthesis of these final products is proposed to proceed via penitrems D and C (PC-21, PC-05, PC-14) and penitrems B and F (PC-21, PC-05, PC-14, PC-23). In Penicillium crustosum (Blue mold fungus), this protein is Short-chain dehydrogenase PC-15.